We begin with the raw amino-acid sequence, 121 residues long: Anther-specific protein SF2 (121 aa).

The signal sequence occupies residues 1-21; that stretch reads MANNSVSYLVLLLLVFVLAIS. N-linked (GlcNAc...) asparagine glycosylation occurs at N115.

In terms of tissue distribution, epidermal anther cells.

The protein resides in the secreted. Its subcellular location is the cell wall. Functionally, anther-specific cell wall protein which could contribute to the cell wall architecture of epidermal anther cells via intermolecular disulfide bridges. The protein is Anther-specific protein SF2 of Helianthus annuus (Common sunflower).